Consider the following 532-residue polypeptide: Berberine bridge enzyme-like 23 (532 aa).

The N-terminal stretch at 1-22 is a signal peptide; that stretch reads MRTLEAFALSLFLVFLVKWVNS. Cysteines 36 and 102 form a disulfide. N78 carries an N-linked (GlcNAc...) asparagine glycan. The region spanning 80–256 is the FAD-binding PCMH-type domain; the sequence is TSQKPILIVT…LSWKVKLVRV (177 aa). A cross-link (6-(S-cysteinyl)-8alpha-(pros-histidyl)-FAD (His-Cys)) is located at residues 117 to 180; that stretch reads HDYEGLSYLS…KIHGFPAGTC (64 aa). Residues N272 and N487 are each glycosylated (N-linked (GlcNAc...) asparagine).

The protein belongs to the oxygen-dependent FAD-linked oxidoreductase family. FAD serves as cofactor. Post-translationally, the FAD cofactor is bound via a bicovalent 6-S-cysteinyl, 8alpha-N1-histidyl FAD linkage. As to expression, accumulates in cell walls of etiolated hypocotyls.

The protein localises to the secreted. Its subcellular location is the cell wall. This Arabidopsis thaliana (Mouse-ear cress) protein is Berberine bridge enzyme-like 23.